Here is a 488-residue protein sequence, read N- to C-terminus: Cytochrome P450 monooxygenase orf2 (488 aa).

Residues 7–27 (LPGIFLPLAGCVLALSLTTIV) traverse the membrane as a helical segment. Cysteine 432 serves as a coordination point for heme.

This sequence belongs to the cytochrome P450 family. Heme serves as cofactor.

Its subcellular location is the membrane. The protein operates within secondary metabolite biosynthesis. In terms of biological role, cytochrome P450 monooxygenase; part of the gene cluster that mediates the biosynthesis of nigerpyrone and its derivatives carbonarone A and pestalamide A. The biosynthesis pathway begins with the polyketide assembly by epaA to form phenylacetyl triketide precursor from successive condensation of two malonyl-CoA, presumably with one phenylacetyl-CoA starter unit produced by the phenylacetyl-CoA ligase epaB. For the nigerpyrone biosynthesis, the reactive polyketide chain is released as an aldehyde through the R-domain. A nonenzymatic cyclization and dehydration may create nigerpyrone. For the biosynthesis of carbonarone A and pestalamide A, an extra methyl group is added through the C-methyltransferase domain. Several further steps involving the dehydrogenase orf1, the cytochrome P450 monooxygenase orf2 and the FAD-dependent monooxygenase orf3 are required to form a carbonarone A precursor which is converted to carbonarone A via cyclization. The O-acetyltransferase epaC could catalyze the transfer of 2-methylsuccinyl-CoA, a common intermediate in the ethylmalonyl-CoA pathway, to generate the final product pestalamide A. The protein is Cytochrome P450 monooxygenase orf2 of Aspergillus niger (strain ATCC MYA-4892 / CBS 513.88 / FGSC A1513).